The sequence spans 652 residues: 1,4-alpha-glucan branching enzyme GlgB (652 aa).

Catalysis depends on Asp322, which acts as the Nucleophile. Residue Glu373 is the Proton donor of the active site.

This sequence belongs to the glycosyl hydrolase 13 family. GlgB subfamily. Monomer.

It catalyses the reaction Transfers a segment of a (1-&gt;4)-alpha-D-glucan chain to a primary hydroxy group in a similar glucan chain.. Its pathway is glycan biosynthesis; glycogen biosynthesis. Functionally, catalyzes the formation of the alpha-1,6-glucosidic linkages in glycogen by scission of a 1,4-alpha-linked oligosaccharide from growing alpha-1,4-glucan chains and the subsequent attachment of the oligosaccharide to the alpha-1,6 position. The protein is 1,4-alpha-glucan branching enzyme GlgB of Deinococcus geothermalis (strain DSM 11300 / CIP 105573 / AG-3a).